Reading from the N-terminus, the 290-residue chain is RWD domain-containing protein 2B (290 aa).

The region spanning 12-136 (SELDLLASMF…EWVKEHAFDY (125 aa)) is the RWD domain.

The sequence is that of RWD domain-containing protein 2B (Rwdd2b) from Mus musculus (Mouse).